An 83-amino-acid chain; its full sequence is Small ribosomal subunit protein bS20 (83 aa).

The span at M1–A11 shows a compositional bias: basic residues. The interval M1–D44 is disordered.

Belongs to the bacterial ribosomal protein bS20 family.

Binds directly to 16S ribosomal RNA. This is Small ribosomal subunit protein bS20 from Desulforapulum autotrophicum (strain ATCC 43914 / DSM 3382 / VKM B-1955 / HRM2) (Desulfobacterium autotrophicum).